A 196-amino-acid chain; its full sequence is Endoribonuclease YbeY (196 aa).

Residues His120, His124, and His130 each coordinate Zn(2+).

Belongs to the endoribonuclease YbeY family. It depends on Zn(2+) as a cofactor.

It localises to the cytoplasm. In terms of biological role, single strand-specific metallo-endoribonuclease involved in late-stage 70S ribosome quality control and in maturation of the 3' terminus of the 16S rRNA. In Corynebacterium glutamicum (strain R), this protein is Endoribonuclease YbeY.